A 590-amino-acid polypeptide reads, in one-letter code: Phosphatidylserine decarboxylase proenzyme 1, mitochondrial (590 aa).

A mitochondrion-targeting transit peptide spans 1-59 (MPLKPISFRWSKTSVRSVPNPFMYGPDNLNKPLSRASQMAERVHQQTPSSTNYQQRRYF). Residues 60-140 (SYYYYQFPKI…GKERRRFIRW (81 aa)) are Mitochondrial matrix-facing. Residues 141 to 159 (WTVTSLTIVLGGVYAKIKY) traverse the membrane as a helical segment. The Mitochondrial intermembrane segment spans residues 160 to 590 (ERGDHEENPY…KVGQSLGGFV (431 aa)). Catalysis depends on charge relay system; for autoendoproteolytic cleavage activity residues Asp-260, His-403, and Ser-558. Residue Ser-558 is the Schiff-base intermediate with substrate; via pyruvic acid; for decarboxylase activity of the active site. Ser-558 carries the post-translational modification Pyruvic acid (Ser); by autocatalysis.

Belongs to the phosphatidylserine decarboxylase family. PSD-B subfamily. Eukaryotic type I sub-subfamily. In terms of assembly, heterodimer of a large membrane-associated beta subunit and a small pyruvoyl-containing alpha subunit. It depends on pyruvate as a cofactor. Is synthesized initially as an inactive proenzyme. Formation of the active enzyme involves a self-maturation process in which the active site pyruvoyl group is generated from an internal serine residue via an autocatalytic post-translational modification. Two non-identical subunits are generated from the proenzyme in this reaction, and the pyruvate is formed at the N-terminus of the alpha chain, which is derived from the carboxyl end of the proenzyme. The autoendoproteolytic cleavage occurs by a canonical serine protease mechanism, in which the side chain hydroxyl group of the serine supplies its oxygen atom to form the C-terminus of the beta chain, while the remainder of the serine residue undergoes an oxidative deamination to produce ammonia and the pyruvoyl prosthetic group on the alpha chain. During this reaction, the Ser that is part of the protease active site of the proenzyme becomes the pyruvoyl prosthetic group, which constitutes an essential element of the active site of the mature decarboxylase.

Its subcellular location is the mitochondrion inner membrane. It catalyses the reaction a 1,2-diacyl-sn-glycero-3-phospho-L-serine + H(+) = a 1,2-diacyl-sn-glycero-3-phosphoethanolamine + CO2. Its pathway is phospholipid metabolism; phosphatidylethanolamine biosynthesis; phosphatidylethanolamine from CDP-diacylglycerol: step 2/2. Functionally, catalyzes the formation of phosphatidylethanolamine (PtdEtn) from phosphatidylserine (PtdSer). Plays a central role in phospholipid metabolism and in the interorganelle trafficking of phosphatidylserine. Important for virulence. This Candida albicans (strain SC5314 / ATCC MYA-2876) (Yeast) protein is Phosphatidylserine decarboxylase proenzyme 1, mitochondrial.